Consider the following 289-residue polypeptide: 33 kDa chaperonin (289 aa).

2 disulfide bridges follow: cysteine 230–cysteine 232 and cysteine 263–cysteine 266.

Belongs to the HSP33 family. Post-translationally, under oxidizing conditions two disulfide bonds are formed involving the reactive cysteines. Under reducing conditions zinc is bound to the reactive cysteines and the protein is inactive.

The protein resides in the cytoplasm. Its function is as follows. Redox regulated molecular chaperone. Protects both thermally unfolding and oxidatively damaged proteins from irreversible aggregation. Plays an important role in the bacterial defense system toward oxidative stress. The sequence is that of 33 kDa chaperonin from Shigella flexneri serotype 5b (strain 8401).